A 216-amino-acid chain; its full sequence is Large ribosomal subunit protein uL3 (216 aa).

The interval 132 to 155 (QDASHGNSRSHRVPGSIGQNQTPG) is disordered. Gln-152 bears the N5-methylglutamine mark.

This sequence belongs to the universal ribosomal protein uL3 family. As to quaternary structure, part of the 50S ribosomal subunit. Forms a cluster with proteins L14 and L19. In terms of processing, methylated by PrmB.

In terms of biological role, one of the primary rRNA binding proteins, it binds directly near the 3'-end of the 23S rRNA, where it nucleates assembly of the 50S subunit. This is Large ribosomal subunit protein uL3 from Legionella pneumophila (strain Paris).